The primary structure comprises 83 residues: Small ribosomal subunit protein eS27 (83 aa).

A C4-type zinc finger spans residues 37–59 (CSGCFKISTVFSHATTVVVCVGC).

The protein belongs to the eukaryotic ribosomal protein eS27 family. It depends on Zn(2+) as a cofactor.

In Caenorhabditis elegans, this protein is Small ribosomal subunit protein eS27 (rps-27).